The sequence spans 270 residues: Flavin-dependent thymidylate synthase (270 aa).

Residues 13–218 enclose the ThyX domain; it reads GFVRLVDQMG…PLAWAAFEEH (206 aa). Residues serine 59, 82–84, and glutamate 90 each bind FAD; that span reads RHR. Residues 79-82, 90-94, and arginine 157 contribute to the dUMP site; these read QWFR and EISGR. A ThyX motif motif is present at residues 82-92; sequence RHRTASVNEIS. FAD is bound by residues 173 to 175 and histidine 179; that span reads DLH. Arginine 184 serves as a coordination point for dUMP. Residue arginine 184 is the Involved in ionization of N3 of dUMP, leading to its activation of the active site.

This sequence belongs to the thymidylate synthase ThyX family. As to quaternary structure, homotetramer. It depends on FAD as a cofactor.

It catalyses the reaction dUMP + (6R)-5,10-methylene-5,6,7,8-tetrahydrofolate + NADPH + H(+) = dTMP + (6S)-5,6,7,8-tetrahydrofolate + NADP(+). It participates in pyrimidine metabolism; dTTP biosynthesis. Its function is as follows. Catalyzes the reductive methylation of 2'-deoxyuridine-5'-monophosphate (dUMP) to 2'-deoxythymidine-5'-monophosphate (dTMP) while utilizing 5,10-methylenetetrahydrofolate (mTHF) as the methyl donor, and NADPH and FADH(2) as the reductant. The polypeptide is Flavin-dependent thymidylate synthase (Thermus thermophilus (strain ATCC BAA-163 / DSM 7039 / HB27)).